The chain runs to 564 residues: Tripeptidyl-peptidase 1 (564 aa).

Positions 1–19 are cleaved as a signal peptide; that stretch reads MGLQACLLGLFALILSGKC. Positions 20-195 are cleaved as a propeptide — removed in mature form; sequence SYSPEPDQRR…PEPQVTGTVG (176 aa). C111 and C122 form a disulfide bridge. The Peptidase S53 domain occupies 199–564; the sequence is GVTPSVIRKR…PALPKTLLNP (366 aa). 2 N-linked (GlcNAc...) asparagine glycosylation sites follow: N210 and N222. Residues E272 and D276 each act as charge relay system in the active site. N-linked (GlcNAc...) asparagine glycans are attached at residues N286, N313, and N443. 2 cysteine pairs are disulfide-bonded: C365–C527 and C523–C538. The active-site Charge relay system is S475. Ca(2+) contacts are provided by D518 and V519. Positions 540, 542, and 544 each coordinate Ca(2+).

In terms of assembly, monomer. Interacts with CLN5. Interacts with CLN3. It depends on Ca(2+) as a cofactor. Post-translationally, activated by autocatalytic proteolytical processing upon acidification. N-glycosylation is required for processing and activity.

Its subcellular location is the lysosome. It localises to the melanosome. The enzyme catalyses Release of an N-terminal tripeptide from a polypeptide, but also has endopeptidase activity.. In terms of biological role, lysosomal serine protease with tripeptidyl-peptidase I activity. May act as a non-specific lysosomal peptidase which generates tripeptides from the breakdown products produced by lysosomal proteinases. Requires substrates with an unsubstituted N-terminus. This Pongo abelii (Sumatran orangutan) protein is Tripeptidyl-peptidase 1 (TPP1).